Here is a 406-residue protein sequence, read N- to C-terminus: Cholinephosphotransferase 1 (406 aa).

Ala-2 is modified (N-acetylalanine). The Cytoplasmic portion of the chain corresponds to 2–62 (AAGAGAGSAP…LLQWIPLWMA (61 aa)). A helical transmembrane segment spans residues 63–83 (PNSITLLGLAVNVVTTLVLIS). Asn-64 contacts CDP-choline. The Lumenal segment spans residues 84–93 (YCPTATEEAP). The chain crosses the membrane as a helical span at residues 94 to 118 (YWTYLLCALGLFIYQSLDAIDGKQA). Positions 111 and 114 each coordinate Mg(2+). Residue Arg-119 coordinates CDP-choline. Residues 119–125 (RRTNSCS) are Cytoplasmic-facing. The chain crosses the membrane as a helical span at residues 126–150 (PLGELFDHGCDSLSTVFMAVGASIA). Residue Asp-132 participates in Mg(2+) binding. His-133 functions as the Proton acceptor in the catalytic mechanism. Mg(2+) is bound at residue Asp-136. The Lumenal segment spans residues 151–160 (ARLGTYPDWF). The chain crosses the membrane as a helical span at residues 161 to 179 (FFCSFIGMFVFYCAHWQTY). Residues 180–190 (VSGMLRFGKVD) lie on the Cytoplasmic side of the membrane. A helical membrane pass occupies residues 191 to 207 (VTEIQIALVIVFVLSAF). Over 208-222 (GGATMWDYTIPILEI) the chain is Lumenal. The helical transmembrane segment at 223–248 (KLKILPVLGFLGGVIFSCSNYFHVIL) threads the bilayer. At 249 to 265 (HGGVGKNGSTIAGTSVL) the chain is on the cytoplasmic side. A helical membrane pass occupies residues 266 to 281 (SPGLHIGLIIILAIMI). Residues 282 to 293 (YKKSATDVFEKH) lie on the Lumenal side of the membrane. A helical membrane pass occupies residues 294–316 (PCLYILMFGCVFAKVSQKLVVAH). At 317-329 (MTKSELYLQDTVF) the chain is on the cytoplasmic side. The chain crosses the membrane as a helical span at residues 330–339 (LGPGLLFLDQ). Topologically, residues 340–346 (YFNNFID) are lumenal. The chain crosses the membrane as a helical span at residues 347 to 376 (EYVVLWMAMVISSFDMVIYFSALCLQISRH). Residues 377–406 (LHLNIFKTACHQAPEQVQVLSSKSHQNNMD) lie on the Cytoplasmic side of the membrane.

It belongs to the CDP-alcohol phosphatidyltransferase class-I family. It depends on Mg(2+) as a cofactor. Mn(2+) is required as a cofactor. Highly expressed in testis, colon, small intestine, heart, prostate and spleen. Also detected in kidney, skeletal muscle, pancreas, leukocytes, ovary and thymus. Weakly expressed in the brain, placenta and lung. Overexpressed in cancerous breast epithelial cell lines.

It localises to the golgi apparatus membrane. It carries out the reaction CDP-choline + a 1,2-diacyl-sn-glycerol = a 1,2-diacyl-sn-glycero-3-phosphocholine + CMP + H(+). It catalyses the reaction 1-octadecanoyl-2-(5Z,8Z,11Z,14Z-eicosatetraenoyl)-sn-glycerol + CDP-choline = 1-octadecanoyl-2-(5Z,8Z,11Z,14Z-eicosatetraenoyl)-sn-glycero-3-phosphocholine + CMP + H(+). The enzyme catalyses 1-hexadecanoyl-2-(9Z-octadecenoyl)-sn-glycerol + CDP-choline = 1-hexadecanoyl-2-(9Z-octadecenoyl)-sn-glycero-3-phosphocholine + CMP + H(+). The catalysed reaction is 1-hexadecanoyl-2-(4Z,7Z,10Z,13Z,16Z,19Z-docosahexaenoyl)-sn-glycerol + CDP-choline = 1-hexadecanoyl-2-(4Z,7Z,10Z,13Z,16Z,19Z-docosahexaenoyl)-sn-glycero-3-phosphocholine + CMP + H(+). It carries out the reaction 1,2-dioctanoyl-sn-glycerol + CDP-choline = 1,2-dioctanoyl-sn-glycero-3-phosphocholine + CMP + H(+). The protein operates within phospholipid metabolism; phosphatidylcholine biosynthesis; phosphatidylcholine from phosphocholine: step 2/2. In terms of biological role, catalyzes the final step of de novo phosphatidylcholine (PC) synthesis, i.e. the transfer of choline phosphate from CDP-choline to the free hydroxyl of a diacylglycerol (DAG), producing a PC. It thereby plays a central role in the formation and maintenance of vesicular membranes. This chain is Cholinephosphotransferase 1, found in Homo sapiens (Human).